Reading from the N-terminus, the 408-residue chain is MQQTTFEESRYRWQDSLENVAVCLPFRCPRCGDHTRFRSLSSLRAHLEFSHSYEERTLLTKCSLLPSLKDTDLLRSSELPKQGKLLRGHAKVTKQKPSYVNLYSISHGHSKDPKPFEMVAERPVSYVQTYTAVDIRADSLDAPRSSSGLPTQDTKAAFEAHVREKFNRMVEAVDRTIEKRIDKLTKELAQKTAELLEVRAAFVQLTQKKQEVQRRERALHKQVDVAVEMIAVLKQRLTESEEELLRKEEEVVTFNHFLEAAAEKEVQGKARLQDFIENLLQRVELAEKQLEYYQSQQASGFSHDTSEHMLTDISSSRKSRCLSRGHQHSVCNHPELKAHFHLKGRSYLKKAKDERAGMQPAKAIHEQAESPREFFRPAKKGEHLGLSRKGNFRPKMAKKKPTAIVNII.

Phosphoserine is present on serine 16. The C2H2-type; degenerate zinc-finger motif lies at 26–51 (FRCPRCGDHTRFRSLSSLRAHLEFSH). Serine 139 and serine 146 each carry phosphoserine. Positions 170–298 (VEAVDRTIEK…QLEYYQSQQA (129 aa)) form a coiled coil. Threonine 176 is modified (phosphothreonine). Phosphoserine is present on serine 370.

In terms of assembly, homodimers. Interacts with NDE1 and NDEL1. Interacts with DISC1. Interacts with PARP1. Interacts with MCRS1. As to expression, expressed in cerebral cortex, hippocampus, olfactory tubercle and striatum.

The protein localises to the cytoplasm. The protein resides in the cytoskeleton. It localises to the microtubule organizing center. Its subcellular location is the centrosome. Its function is as follows. Involved in the positive regulation of oligodendrocyte differentiation during postnatal growth. Involved in the morphogenesis of basket cells in the somatosensory cortex during embryogenesis. Involved in dendritic arborization, morphogenesis of spine density dendrite, and establishment of postsynaptic dendrite density in cortical pyramidal neurons. Involved in the regulation of neurogenesis. Negatively regulates neurite outgrowth. Involved in homologous recombination (HR) repair pathway. Required for proper resolution of DNA double-strand breaks (DSBs) by HR. Is required for recovery of stalled replication forks, and directly contributes to genomic stability. Interacts with PARP1 and mediates MRE11-dependent DNA end resection during replication fork recovery. Contributes to genomic stability by preventing telomere dysfunction. In Rattus norvegicus (Rat), this protein is Protein ZNF365 (Znf365).